Reading from the N-terminus, the 107-residue chain is U1-lycotoxin-Ls1b (107 aa).

The first 20 residues, 1–20, serve as a signal peptide directing secretion; that stretch reads MMKVLVVVALLVTHISYSSS. The propeptide occupies 21–41; it reads EGIDDLEADELLSLMANEQTR. 4 disulfides stabilise this stretch: C44-C59, C51-C68, C58-C86, and C70-C84.

The protein belongs to the neurotoxin 19 (CSTX) family. 04 (U1-Lctx) subfamily. Expressed by the venom gland.

It is found in the secreted. In Lycosa singoriensis (Wolf spider), this protein is U1-lycotoxin-Ls1b.